A 327-amino-acid chain; its full sequence is Phenylalanine--tRNA ligase alpha subunit (327 aa).

Glutamate 252 is a binding site for Mg(2+).

The protein belongs to the class-II aminoacyl-tRNA synthetase family. Phe-tRNA synthetase alpha subunit type 1 subfamily. Tetramer of two alpha and two beta subunits. Requires Mg(2+) as cofactor.

It localises to the cytoplasm. It carries out the reaction tRNA(Phe) + L-phenylalanine + ATP = L-phenylalanyl-tRNA(Phe) + AMP + diphosphate + H(+). The protein is Phenylalanine--tRNA ligase alpha subunit of Vibrio cholerae serotype O1 (strain ATCC 39541 / Classical Ogawa 395 / O395).